We begin with the raw amino-acid sequence, 130 residues long: Sec-independent protein translocase protein TatB (130 aa).

A helical transmembrane segment spans residues 1–21 (MFDISFTELIVIGIVALVVIG). Residues 70 to 130 (VDSFQNSVHS…TPKEPRQSGS (61 aa)) are disordered. Basic and acidic residues-rich tracts occupy residues 80 to 89 (EINKIQETAD) and 96 to 111 (PEKESHAVESGGKTEP).

Belongs to the TatB family. In terms of assembly, the Tat system comprises two distinct complexes: a TatABC complex, containing multiple copies of TatA, TatB and TatC subunits, and a separate TatA complex, containing only TatA subunits. Substrates initially bind to the TatABC complex, which probably triggers association of the separate TatA complex to form the active translocon.

It is found in the cell inner membrane. Its function is as follows. Part of the twin-arginine translocation (Tat) system that transports large folded proteins containing a characteristic twin-arginine motif in their signal peptide across membranes. Together with TatC, TatB is part of a receptor directly interacting with Tat signal peptides. TatB may form an oligomeric binding site that transiently accommodates folded Tat precursor proteins before their translocation. This chain is Sec-independent protein translocase protein TatB, found in Nitrosomonas eutropha (strain DSM 101675 / C91 / Nm57).